We begin with the raw amino-acid sequence, 166 residues long: Transcription antitermination protein NusB (166 aa).

A compositionally biased stretch (basic and acidic residues) spans 1–18 (MISDESDRFNPRDPKPAD). The tract at residues 1-28 (MISDESDRFNPRDPKPADAGKPSKSAKR) is disordered.

Belongs to the NusB family.

Functionally, involved in transcription antitermination. Required for transcription of ribosomal RNA (rRNA) genes. Binds specifically to the boxA antiterminator sequence of the ribosomal RNA (rrn) operons. The chain is Transcription antitermination protein NusB from Pseudomonas putida (strain W619).